Reading from the N-terminus, the 464-residue chain is Alpha-1,6-mannosyl-glycoprotein 4-beta-N-acetylglucosaminyltransferase (464 aa).

Over 1–10 the chain is Cytoplasmic; sequence MRCSPKRSLT. The chain crosses the membrane as a helical; Signal-anchor for type II membrane protein span at residues 11-31; that stretch reads AVIAASFLLLLLLLLLHRGSW. The Lumenal portion of the chain corresponds to 32–464; that stretch reads QDPQEVQFRD…QSIGIWTAGT (433 aa). Asparagine 70 and asparagine 201 each carry an N-linked (GlcNAc...) asparagine glycan.

The protein belongs to the glycosyltransferase 54 family. Requires a divalent metal cation as cofactor. As to expression, highly expressed in oviduct, spleen, lung and colon.

It localises to the golgi apparatus membrane. The enzyme catalyses N(4)-{beta-D-GlcNAc-(1-&gt;2)-[beta-D-GlcNAc-(1-&gt;4)]-alpha-D-Man-(1-&gt;3)-[beta-D-GlcNAc-(1-&gt;2)-[beta-D-GlcNAc-(1-&gt;6)]-alpha-D-Man-(1-&gt;6)]-beta-D-Man-(1-&gt;4)-beta-D-GlcNAc-(1-&gt;4)-beta-D-GlcNAc}-L-asparaginyl-[protein] + UDP-N-acetyl-alpha-D-glucosamine = N(4)-{beta-D-GlcNAc-(1-&gt;2)-[beta-D-GlcNAc-(1-&gt;4)]-alpha-D-Man-(1-&gt;3)-[beta-D-GlcNAc-(1-&gt;2)-[beta-D-GlcNAc-(1-&gt;4)]-[beta-D-GlcNAc-(1-&gt;6)]-alpha-D-Man-(1-&gt;6)]-beta-D-Man-(1-&gt;4)-beta-D-GlcNAc-(1-&gt;4)-beta-D-GlcNAc}-L-asparaginyl-[protein] + UDP + H(+). The protein operates within protein modification; protein glycosylation. Its function is as follows. Glycosyltransferase that catalyzes the transfer of GlcNAc to the Manalpha1-6 arm to form GlcNAcBeta1-4Manalpha1-6 linkage (also named 'GnT-VI' activity). May also participate in the transfer of N-acetylglucosamine (GlcNAc) to the core mannose residues of N-linked glycans by catalyzing the formation of the GlcNAcbeta1-4 branch on the GlcNAcbeta1-2Manalpha1-3 arm of the core structure of N-linked glycans. This is Alpha-1,6-mannosyl-glycoprotein 4-beta-N-acetylglucosaminyltransferase (MGAT4C) from Gallus gallus (Chicken).